A 187-amino-acid chain; its full sequence is dTTP/UTP pyrophosphatase (187 aa).

Residue D72 is the Proton acceptor of the active site.

It belongs to the Maf family. YhdE subfamily. It depends on a divalent metal cation as a cofactor.

The protein localises to the cytoplasm. It carries out the reaction dTTP + H2O = dTMP + diphosphate + H(+). The catalysed reaction is UTP + H2O = UMP + diphosphate + H(+). Functionally, nucleoside triphosphate pyrophosphatase that hydrolyzes dTTP and UTP. May have a dual role in cell division arrest and in preventing the incorporation of modified nucleotides into cellular nucleic acids. This Vibrio cholerae serotype O1 (strain ATCC 39315 / El Tor Inaba N16961) protein is dTTP/UTP pyrophosphatase.